The chain runs to 318 residues: L-lactate dehydrogenase (318 aa).

Residues Val18, Asp39, Lys44, Tyr69, and 83–84 each bind NAD(+); that span reads GA. Substrate contacts are provided by Gln86 and Arg92. Residues Ser105, 122–124, and Ser147 each bind NAD(+); that span reads VSN. Residue 124–127 participates in substrate binding; the sequence is NPVD. Residue 152–155 coordinates substrate; the sequence is DTSR. The active-site Proton acceptor is His179. Position 225 is a phosphotyrosine (Tyr225). Thr234 provides a ligand contact to substrate.

The protein belongs to the LDH/MDH superfamily. LDH family. Homotetramer.

Its subcellular location is the cytoplasm. The catalysed reaction is (S)-lactate + NAD(+) = pyruvate + NADH + H(+). It functions in the pathway fermentation; pyruvate fermentation to lactate; (S)-lactate from pyruvate: step 1/1. Its function is as follows. Catalyzes the conversion of lactate to pyruvate. The chain is L-lactate dehydrogenase from Clostridium botulinum (strain 657 / Type Ba4).